The sequence spans 256 residues: Glucosamine-6-phosphate deaminase (256 aa).

Asp-68 acts as the Proton acceptor; for enolization step in catalysis. Asn-137 serves as the catalytic For ring-opening step. His-139 serves as the catalytic Proton acceptor; for ring-opening step. Glu-144 serves as the catalytic For ring-opening step.

It belongs to the glucosamine/galactosamine-6-phosphate isomerase family. NagB subfamily.

It catalyses the reaction alpha-D-glucosamine 6-phosphate + H2O = beta-D-fructose 6-phosphate + NH4(+). It functions in the pathway amino-sugar metabolism; N-acetylneuraminate degradation; D-fructose 6-phosphate from N-acetylneuraminate: step 5/5. Catalyzes the reversible isomerization-deamination of glucosamine 6-phosphate (GlcN6P) to form fructose 6-phosphate (Fru6P) and ammonium ion. The polypeptide is Glucosamine-6-phosphate deaminase (Mycoplasmopsis pulmonis (strain UAB CTIP) (Mycoplasma pulmonis)).